Here is a 129-residue protein sequence, read N- to C-terminus: Lysozyme C (129 aa).

The region spanning 1–129 (KVYGRCELAA…VQAWIRGCRL (129 aa)) is the C-type lysozyme domain. Intrachain disulfides connect C6-C127, C30-C115, C64-C80, and C76-C94. Catalysis depends on residues E35 and D52.

This sequence belongs to the glycosyl hydrolase 22 family. As to quaternary structure, monomer.

The protein resides in the secreted. The catalysed reaction is Hydrolysis of (1-&gt;4)-beta-linkages between N-acetylmuramic acid and N-acetyl-D-glucosamine residues in a peptidoglycan and between N-acetyl-D-glucosamine residues in chitodextrins.. In terms of biological role, lysozymes have primarily a bacteriolytic function; those in tissues and body fluids are associated with the monocyte-macrophage system and enhance the activity of immunoagents. This chain is Lysozyme C (LYZ), found in Tragopan satyra (Satyr tragopan).